Here is a 1214-residue protein sequence, read N- to C-terminus: Receptor-type guanylate cyclase gcy-19 (1214 aa).

An N-terminal signal peptide occupies residues 1–18 (MEHLIFLLIFGGYSPSIA). The Extracellular portion of the chain corresponds to 19–517 (QITSSTTTTT…PQTFVDQYGA (499 aa)). 4 N-linked (GlcNAc...) asparagine glycosylation sites follow: N85, N363, N441, and N464. A helical membrane pass occupies residues 518–538 (LVFSIGGVLALAMLFLITCFF). Topologically, residues 539–1214 (YVLRQRKLER…FRRQETLALM (676 aa)) are cytoplasmic. The Protein kinase domain maps to 572–859 (RMSKRSIQSG…KGNLMDHVFN (288 aa)). The region spanning 917–1047 (TVFFSDVVKF…DTVNTASRME (131 aa)) is the Guanylate cyclase domain. The disordered stretch occupies residues 1116-1197 (NSSNMAYNPE…EKAREIHNEE (82 aa)). Over residues 1133–1142 (DDEDVDDESS) the composition is skewed to acidic residues. Positions 1186–1197 (LEEKAREIHNEE) are enriched in basic and acidic residues.

It belongs to the adenylyl cyclase class-4/guanylyl cyclase family. In terms of tissue distribution, expressed asymmetrically in ASE right (ASER) sensory neuron.

Its subcellular location is the cell membrane. It carries out the reaction GTP = 3',5'-cyclic GMP + diphosphate. Guanylate cyclase involved in the production of the second messenger cGMP. In Caenorhabditis briggsae, this protein is Receptor-type guanylate cyclase gcy-19.